A 337-amino-acid polypeptide reads, in one-letter code: Transaldolase (337 aa).

The Nuclear localization signal signature appears at 1–10 (MSGSPVKRQR). Lys115 carries the N6-acetyllysine modification. The active-site Schiff-base intermediate with substrate is Lys142. At Lys219 the chain carries N6-acetyllysine. 2 positions are modified to phosphoserine: Ser237 and Ser256. 3 positions are modified to N6-acetyllysine: Lys269, Lys286, and Lys321.

Belongs to the transaldolase family. Type 1 subfamily. In terms of assembly, homodimer. Interacts with KPNA1 and KPNA4.

It is found in the nucleus. The protein localises to the cytoplasm. The enzyme catalyses D-sedoheptulose 7-phosphate + D-glyceraldehyde 3-phosphate = D-erythrose 4-phosphate + beta-D-fructose 6-phosphate. It functions in the pathway carbohydrate degradation; pentose phosphate pathway; D-glyceraldehyde 3-phosphate and beta-D-fructose 6-phosphate from D-ribose 5-phosphate and D-xylulose 5-phosphate (non-oxidative stage): step 2/3. In terms of biological role, catalyzes the rate-limiting step of the non-oxidative phase in the pentose phosphate pathway. Catalyzes the reversible conversion of sedheptulose-7-phosphate and D-glyceraldehyde 3-phosphate into erythrose-4-phosphate and beta-D-fructose 6-phosphate. This Rattus norvegicus (Rat) protein is Transaldolase (Taldo1).